The following is a 147-amino-acid chain: Putative toxin MJ0142 (147 aa).

The protein belongs to the UPF0332 family.

Its function is as follows. Putative toxin component of a putative type VII toxin-antitoxin (TA) system. Its cognate antitoxin might be MJ0141. This is Putative toxin MJ0142 from Methanocaldococcus jannaschii (strain ATCC 43067 / DSM 2661 / JAL-1 / JCM 10045 / NBRC 100440) (Methanococcus jannaschii).